Consider the following 234-residue polypeptide: MPFVRPLVTVVRAGRHSYSAGLQLQQRLARSNQILNPPAEFRNYLVLQEHDPVYTVGLRTKDYTAQDEDRLRRLGADFHRTDRGGLITFHGPGQLVAYPILHLGQFVPSIRWYVATLERMVVEACHQMGISSAKATKDTGIWVGDNKICAIGIHGSRYVTTHGIGLNCCTDLQWFEHIVPCGIEGKGVTSLSKELDRHFPVEEASGALLNSFAKVFECRLQEHAKKPASSAEIG.

The N-terminal 28 residues, 1-28 (MPFVRPLVTVVRAGRHSYSAGLQLQQRL), are a transit peptide targeting the mitochondrion. In terms of domain architecture, BPL/LPL catalytic spans 39 to 220 (AEFRNYLVLQ…SFAKVFECRL (182 aa)). Residues 83–90 (RGGLITFH), 150–152 (AIG), and 163–165 (GIG) each bind substrate. C181 functions as the Acyl-thioester intermediate in the catalytic mechanism.

The protein belongs to the LipB family.

It is found in the mitochondrion. It carries out the reaction octanoyl-[ACP] + L-lysyl-[protein] = N(6)-octanoyl-L-lysyl-[protein] + holo-[ACP] + H(+). Its pathway is protein modification; protein lipoylation via endogenous pathway; protein N(6)-(lipoyl)lysine from octanoyl-[acyl-carrier-protein]: step 1/2. Its function is as follows. Catalyzes the transfer of endogenously produced octanoic acid from octanoyl-acyl-carrier-protein onto the lipoyl domains of lipoate-dependent enzymes. Lipoyl-ACP can also act as a substrate although octanoyl-ACP is likely to be the physiological substrate. The protein is Putative lipoyltransferase 2, mitochondrial of Drosophila melanogaster (Fruit fly).